Reading from the N-terminus, the 274-residue chain is MAIHLYKTSTPSTRNGTVGSQVKSNPRNNLIYGQRRCGKGRNARGIITARHRGGGHKRLYRKIDFRRNEKDISGRIVTIEYDPNRNAYICLIHYGDGEKRYILHPRGAIIGDTIVSGTEVPISMGNALPLTDMPLGTAIHNIEITLGKGGQLARAAGAVAKLIAKEGKSATLKLPSGEVRLISKNCSATVGQVGNVGVNQKSLGRAGSKRWLGKRPVVRGVVMNPVDHPHGGGEGRAPIGRKKPTTPWGYPALGRRSRKRNKYSDSLILRRRSK.

Disordered regions lie at residues 1 to 23 (MAIHLYKTSTPSTRNGTVGSQVK) and 223 to 274 (MNPV…RRSK). Residues 7-23 (KTSTPSTRNGTVGSQVK) are compositionally biased toward polar residues.

It belongs to the universal ribosomal protein uL2 family. In terms of assembly, part of the 50S ribosomal subunit.

It localises to the plastid. Its subcellular location is the chloroplast. This chain is Large ribosomal subunit protein uL2cz/uL2cy (rpl2-A), found in Nandina domestica (Heavenly bamboo).